Here is a 249-residue protein sequence, read N- to C-terminus: Probable transcriptional regulatory protein AB57_1731 (249 aa).

Belongs to the TACO1 family.

The protein resides in the cytoplasm. This is Probable transcriptional regulatory protein AB57_1731 from Acinetobacter baumannii (strain AB0057).